The primary structure comprises 500 residues: Probable cytosol aminopeptidase (500 aa).

Mn(2+) is bound by residues Lys-261 and Asp-266. Residue Lys-273 is part of the active site. Positions 284, 343, and 345 each coordinate Mn(2+). Residue Arg-347 is part of the active site.

This sequence belongs to the peptidase M17 family. The cofactor is Mn(2+).

It localises to the cytoplasm. It carries out the reaction Release of an N-terminal amino acid, Xaa-|-Yaa-, in which Xaa is preferably Leu, but may be other amino acids including Pro although not Arg or Lys, and Yaa may be Pro. Amino acid amides and methyl esters are also readily hydrolyzed, but rates on arylamides are exceedingly low.. It catalyses the reaction Release of an N-terminal amino acid, preferentially leucine, but not glutamic or aspartic acids.. Presumably involved in the processing and regular turnover of intracellular proteins. Catalyzes the removal of unsubstituted N-terminal amino acids from various peptides. The protein is Probable cytosol aminopeptidase of Wolbachia pipientis wMel.